Consider the following 234-residue polypeptide: Endonuclease V (234 aa).

Mg(2+)-binding residues include D42 and D108.

The protein belongs to the endonuclease V family. Mg(2+) is required as a cofactor.

The protein resides in the cytoplasm. It carries out the reaction Endonucleolytic cleavage at apurinic or apyrimidinic sites to products with a 5'-phosphate.. Functionally, DNA repair enzyme involved in the repair of deaminated bases. Selectively cleaves double-stranded DNA at the second phosphodiester bond 3' to a deoxyinosine leaving behind the intact lesion on the nicked DNA. In Geotalea uraniireducens (strain Rf4) (Geobacter uraniireducens), this protein is Endonuclease V.